A 1239-amino-acid polypeptide reads, in one-letter code: Inner tegument protein (1239 aa).

Disordered stretches follow at residues 1-20, 669-704, 959-980, and 1087-1239; these read MASAMESDSGGGSGGADAQP, GESPQAVGLRPLNLEGEGKAGDAGADGAEDEEGGGP, RPPPVFTPAPRRLPQGGADTPP, and GRNA…AEDE. The segment at 615–1239 is interaction with large tegument protein; it reads NELPKTRSLA…RPPRPTAEDE (625 aa). Residues 1112-1123 are compositionally biased toward low complexity; the sequence is DSSPFSFSSSDF. The segment covering 1139 to 1148 has biased composition (gly residues); that stretch reads VPGGGGGGEG. The span at 1151 to 1170 shows a compositional bias: basic and acidic residues; that stretch reads EEERERPSDIDTAARARKVE. Residues 1180-1189 are compositionally biased toward low complexity; sequence RTTPSPSRRA. Basic residues predominate over residues 1219 to 1232; the sequence is VRPRTRRGATRRPP.

Belongs to the herpesviridae inner tegument protein family. As to quaternary structure, interacts (via C-terminus) with the large tegument protein/LTP (via N-terminus).

It localises to the virion tegument. The protein localises to the host cytoplasm. It is found in the host nucleus. Its subcellular location is the host Golgi apparatus. The protein resides in the host trans-Golgi network. In terms of biological role, plays an essential role in cytoplasmic secondary envelopment during viral egress. Interacts with the capsid via the large tegument protein/LTP and participates in its transport to the host trans-Golgi network (TGN) where secondary envelopment occurs. Modulates tegumentation and capsid accumulation at the viral assembly complex. The polypeptide is Inner tegument protein (Homo sapiens (Human)).